Reading from the N-terminus, the 635-residue chain is 1-deoxy-D-xylulose-5-phosphate synthase (635 aa).

Thiamine diphosphate-binding positions include His74 and 115-117 (GHA). Residue Asp146 coordinates Mg(2+). Thiamine diphosphate contacts are provided by residues 147 to 148 (GA), Asn175, Tyr285, and Glu367. Asn175 contributes to the Mg(2+) binding site.

This sequence belongs to the transketolase family. DXPS subfamily. As to quaternary structure, homodimer. Mg(2+) serves as cofactor. Requires thiamine diphosphate as cofactor.

It carries out the reaction D-glyceraldehyde 3-phosphate + pyruvate + H(+) = 1-deoxy-D-xylulose 5-phosphate + CO2. Its pathway is metabolic intermediate biosynthesis; 1-deoxy-D-xylulose 5-phosphate biosynthesis; 1-deoxy-D-xylulose 5-phosphate from D-glyceraldehyde 3-phosphate and pyruvate: step 1/1. In terms of biological role, catalyzes the acyloin condensation reaction between C atoms 2 and 3 of pyruvate and glyceraldehyde 3-phosphate to yield 1-deoxy-D-xylulose-5-phosphate (DXP). The protein is 1-deoxy-D-xylulose-5-phosphate synthase of Anaeromyxobacter sp. (strain Fw109-5).